Consider the following 490-residue polypeptide: Histone-lysine N-methyltransferase, H3 lysine-9 specific (490 aa).

The 62-residue stretch at 8 to 69 (YEVERIVDEK…RKRRLKGSNS (62 aa)) folds into the Chromo domain. 2 disordered regions span residues 61-133 (KRRL…TALT) and 150-190 (KKLG…KPRN). Residues 102 to 114 (FSRELNVKKENKK) show a composition bias toward basic and acidic residues. Over residues 115 to 133 (VFSSQTTKRQSRKQSTALT) the composition is skewed to polar residues. An N6,N6,N6-trimethyllysine; alternate modification is found at Lys-127. Residue Lys-127 is modified to N6-methyllysine; alternate. The span at 155–168 (TRNEVKEESQKREL) shows a compositional bias: basic and acidic residues. The span at 169 to 185 (VSNSIKEATSPKTSSIL) shows a compositional bias: polar residues. The Pre-SET domain occupies 258–325 (SGCNCSSLGG…ECPNRVVQRG (68 aa)). Cys-260, Cys-262, Cys-268, Cys-276, Cys-278, Cys-307, Cys-311, Cys-313, and Cys-317 together coordinate Zn(2+). The 125-residue stretch at 328 to 452 (LPLEIFKTKE…PLEELTFDYA (125 aa)) folds into the SET domain. S-adenosyl-L-methionine-binding positions include 338–340 (KGW), Tyr-381, Arg-406, and 407–410 (FFNH). Cys-412 provides a ligand contact to Zn(2+). Positions 453 to 472 (GAKDFSPVQSQKSQQNRISK) are autoregulatory loop. Lys-455 bears the N6,N6,N6-trimethyllysine; by autocatalysis; alternate mark. Residue Lys-455 is modified to N6,N6-dimethyllysine; by autocatalysis; alternate. Lys-455 carries the N6-methyllysine; by autocatalysis; alternate modification. At Lys-464 the chain carries N6-methyllysine. The region spanning 473–489 (LRRQCKCGSANCRGWLF) is the Post-SET domain. Zn(2+)-binding residues include Cys-477, Cys-479, and Cys-484. 477 to 478 (CK) lines the S-adenosyl-L-methionine pocket.

This sequence belongs to the class V-like SAM-binding methyltransferase superfamily. Histone-lysine methyltransferase family. Suvar3-9 subfamily. Component of the Clr4 methyltransferase complex (ClrC) composed of at least clr4, rik1, pcu4, rbx1, raf1 and raf2. The cullin pcu4, rik1, raf1, raf2 and the ring-box protein rbx1 are components of an E3 ubiquitin ligase, whose activity is essential for heterochromatin assembly. Interacts directly with pcu4. Interacts with mlo3. Post-translationally, autocatalytic methylation of specific lysine residues in an internal loop (autoregulatory loop) promote a conformational switch that enhances the H3K9me activity of clr4.

Its subcellular location is the nucleus. It localises to the cytoplasm. The protein resides in the cytoskeleton. It is found in the microtubule organizing center. The protein localises to the spindle pole body. Its subcellular location is the chromosome. The catalysed reaction is L-lysyl(9)-[histone H3] + 3 S-adenosyl-L-methionine = N(6),N(6),N(6)-trimethyl-L-lysyl(9)-[histone H3] + 3 S-adenosyl-L-homocysteine + 3 H(+). It carries out the reaction N(6)-methyl-L-lysyl(9)-[histone H3] + S-adenosyl-L-methionine = N(6),N(6)-dimethyl-L-lysyl(9)-[histone H3] + S-adenosyl-L-homocysteine + H(+). It catalyses the reaction N(6),N(6)-dimethyl-L-lysyl(9)-[histone H3] + S-adenosyl-L-methionine = N(6),N(6),N(6)-trimethyl-L-lysyl(9)-[histone H3] + S-adenosyl-L-homocysteine + H(+). The enzyme catalyses L-lysyl-[protein] + S-adenosyl-L-methionine = N(6)-methyl-L-lysyl-[protein] + S-adenosyl-L-homocysteine + H(+). The catalysed reaction is N(6)-methyl-L-lysyl-[protein] + S-adenosyl-L-methionine = N(6),N(6)-dimethyl-L-lysyl-[protein] + S-adenosyl-L-homocysteine + H(+). It carries out the reaction N(6),N(6)-dimethyl-L-lysyl-[protein] + S-adenosyl-L-methionine = N(6),N(6),N(6)-trimethyl-L-lysyl-[protein] + S-adenosyl-L-homocysteine + H(+). It catalyses the reaction L-lysyl(9)-[histone H3] + S-adenosyl-L-methionine = N(6)-methyl-L-lysyl(9)-[histone H3] + S-adenosyl-L-homocysteine + H(+). An internal loop (autoregulatory loop) inhibits the catalytic activity of the enzyme by blocking the histone H3K9 substrate-binding pocket. Autocatalytic methylation of specific lysine residues in this loop promote a conformational switch that enhances the H3K9me activity of clr4. In terms of biological role, histone methyltransferase which contributes to the establishment of heterochromatin by specifically methylating histone H3 to form H3K9me. Part of the Clr4 methyltransferase complex (ClrC). ClrC preferentially ubiquitylates H3K14 and ClrC-mediated H3 ubiquitination promotes clr4 methyltransferase activity. Clr4 functions as a reader and writer of H3K9 methylation. It sets the H3K9me mark and afterwards this H3K9me mark is recognized by the chromodomains of clr4 and swi6/HP1, which then recruit additional clr4 leading to the methylation of neighboring nucleosomes. H3K9me represents a specific tag for epigenetic transcriptional repression by recruiting swi6/HP1 to methylated histones which leads to transcriptional silencing within centromeric heterochromatin, telomeres, ribosomal DNA repeats, and the silent mating-type region. Clr4 methyltransferase activity promotes the assembly of a tripartite complex composed of ClrC and complexes involved in siRNA generation. Apart from H3K9, also methylates non-histone proteins such as mlo3. Interacts with mlo3 to promote the processing of centromeric and antisense RNAs. The protein is Histone-lysine N-methyltransferase, H3 lysine-9 specific (clr4) of Schizosaccharomyces pombe (strain 972 / ATCC 24843) (Fission yeast).